The primary structure comprises 357 residues: tRNA N6-adenosine threonylcarbamoyltransferase (357 aa).

Positions 116 and 120 each coordinate Fe cation. Residues 139 to 143 (LVSGG), Asp-172, Gly-185, and Asn-284 each bind substrate. Asp-312 is a Fe cation binding site.

The protein belongs to the KAE1 / TsaD family. It depends on Fe(2+) as a cofactor.

The protein localises to the cytoplasm. The catalysed reaction is L-threonylcarbamoyladenylate + adenosine(37) in tRNA = N(6)-L-threonylcarbamoyladenosine(37) in tRNA + AMP + H(+). Its function is as follows. Required for the formation of a threonylcarbamoyl group on adenosine at position 37 (t(6)A37) in tRNAs that read codons beginning with adenine. Is involved in the transfer of the threonylcarbamoyl moiety of threonylcarbamoyl-AMP (TC-AMP) to the N6 group of A37, together with TsaE and TsaB. TsaD likely plays a direct catalytic role in this reaction. The chain is tRNA N6-adenosine threonylcarbamoyltransferase from Synechococcus sp. (strain CC9605).